A 162-amino-acid chain; its full sequence is Xanthine-guanine phosphoribosyltransferase (162 aa).

5-phospho-alpha-D-ribose 1-diphosphate contacts are provided by residues 43–44 and 94–102; these read RG and DDLVDTGTT. Asp-95 contacts Mg(2+). Positions 98 and 141 each coordinate guanine. Xanthine is bound by residues Asp-98 and Ile-141. GMP is bound by residues 98-102 and 140-141; these read DTGTT and WI.

Belongs to the purine/pyrimidine phosphoribosyltransferase family. XGPT subfamily. Homotetramer. The cofactor is Mg(2+).

The protein localises to the cell inner membrane. The catalysed reaction is GMP + diphosphate = guanine + 5-phospho-alpha-D-ribose 1-diphosphate. It catalyses the reaction XMP + diphosphate = xanthine + 5-phospho-alpha-D-ribose 1-diphosphate. The enzyme catalyses IMP + diphosphate = hypoxanthine + 5-phospho-alpha-D-ribose 1-diphosphate. The protein operates within purine metabolism; GMP biosynthesis via salvage pathway; GMP from guanine: step 1/1. Its pathway is purine metabolism; XMP biosynthesis via salvage pathway; XMP from xanthine: step 1/1. Functionally, purine salvage pathway enzyme that catalyzes the transfer of the ribosyl-5-phosphate group from 5-phospho-alpha-D-ribose 1-diphosphate (PRPP) to the N9 position of the 6-oxopurines guanine and xanthine to form the corresponding ribonucleotides GMP (guanosine 5'-monophosphate) and XMP (xanthosine 5'-monophosphate), with the release of PPi. To a lesser extent, also acts on hypoxanthine. This Oleidesulfovibrio alaskensis (strain ATCC BAA-1058 / DSM 17464 / G20) (Desulfovibrio alaskensis) protein is Xanthine-guanine phosphoribosyltransferase.